Reading from the N-terminus, the 536-residue chain is Phosphoenolpyruvate carboxykinase (ATP) (536 aa).

Substrate is bound by residues Arg61, Tyr195, and Lys201. Residues Lys201, His220, and 236-244 (GLSGTGKTT) contribute to the ATP site. 2 residues coordinate Mn(2+): Lys201 and His220. A Mn(2+)-binding site is contributed by Asp257. ATP-binding residues include Glu285, Arg322, and Thr447. Residue Arg322 participates in substrate binding.

It belongs to the phosphoenolpyruvate carboxykinase (ATP) family. It depends on Mn(2+) as a cofactor.

The protein localises to the cytoplasm. It catalyses the reaction oxaloacetate + ATP = phosphoenolpyruvate + ADP + CO2. Its pathway is carbohydrate biosynthesis; gluconeogenesis. Its function is as follows. Involved in the gluconeogenesis. Catalyzes the conversion of oxaloacetate (OAA) to phosphoenolpyruvate (PEP) through direct phosphoryl transfer between the nucleoside triphosphate and OAA. This is Phosphoenolpyruvate carboxykinase (ATP) from Mesorhizobium japonicum (strain LMG 29417 / CECT 9101 / MAFF 303099) (Mesorhizobium loti (strain MAFF 303099)).